Reading from the N-terminus, the 119-residue chain is Platelet basic protein (119 aa).

An N-terminal signal peptide occupies residues 1–33; sequence MSLRLGAISSCTTSSPFPVLQVLLPLSLLLTTL. Positions 34 to 39 are excised as a propeptide; that stretch reads VPATMG. Intrachain disulfides connect C54–C80 and C56–C96.

The protein localises to the secreted. Chemoattractant factor for neutrophils. The polypeptide is Platelet basic protein (PPBP) (Sus scrofa (Pig)).